Reading from the N-terminus, the 459-residue chain is Glycosyl hydrolase family 109 protein (459 aa).

A signal peptide (tat-type signal) is located at residues 1–31 (MHNIHRRNFLKAAGAATAGLVTANIALSAYA). NAD(+)-binding positions include 64–65 (ER), Asp-86, 135–138 (WEWH), 155–156 (EV), and Asn-184. Substrate contacts are provided by residues Tyr-213, Arg-232, 244-247 (YPTH), and Tyr-326. Tyr-244 provides a ligand contact to NAD(+).

The protein belongs to the Gfo/Idh/MocA family. Glycosyl hydrolase 109 subfamily. It depends on NAD(+) as a cofactor. In terms of processing, predicted to be exported by the Tat system. The position of the signal peptide cleavage has not been experimentally proven.

Its function is as follows. Glycosidase. This chain is Glycosyl hydrolase family 109 protein, found in Shewanella baltica (strain OS185).